The chain runs to 199 residues: Recombination protein RecR (199 aa).

The C4-type zinc-finger motif lies at 58 to 73 (CSVCYGLADSDPCHIC). One can recognise a Toprim domain in the interval 81 to 176 (DVVCVVEQGT…KITRIASGVP (96 aa)).

This sequence belongs to the RecR family.

Functionally, may play a role in DNA repair. It seems to be involved in an RecBC-independent recombinational process of DNA repair. It may act with RecF and RecO. This chain is Recombination protein RecR, found in Desulfatibacillum aliphaticivorans.